The primary structure comprises 495 residues: Glucokinase (495 aa).

Residues 3–483 (SALLDEAARI…SGVGAALIAL (481 aa)) enclose the Hexokinase domain. Positions 57-206 (NGTEKGLYLA…GLPVRVAALV (150 aa)) are hexokinase small subdomain. Lys93 is an ATP binding site. A glucose-binding region spans residues 149 to 175 (DLGFTFSFPVRQLGINKGTLIRWTKGF). Residues 207 to 472 (NDTVGTLMAR…KKIRIGISKD (266 aa)) form a hexokinase large subdomain region. Position 472–477 (472–477 (DGSGVG)) interacts with ATP.

This sequence belongs to the hexokinase family. Monomer.

It carries out the reaction D-glucose + ATP = D-glucose 6-phosphate + ADP + H(+). The catalysed reaction is a D-hexose + ATP = a D-hexose 6-phosphate + ADP + H(+). It catalyses the reaction D-mannose + ATP = D-mannose 6-phosphate + ADP + H(+). The enzyme catalyses D-glucosamine + ATP = D-glucosamine 6-phosphate + ADP + H(+). It functions in the pathway carbohydrate metabolism; hexose metabolism. Its pathway is carbohydrate degradation; glycolysis; D-glyceraldehyde 3-phosphate and glycerone phosphate from D-glucose: step 1/4. In terms of biological role, the enzyme has great affinity for glucose. Mannose, 2-deoxyglucose and glucosamine can serve as substrates. In Aspergillus niger, this protein is Glucokinase (glkA).